Here is a 481-residue protein sequence, read N- to C-terminus: E3 ubiquitin-protein ligase makorin-1 (481 aa).

3 C3H1-type zinc fingers span residues 55-82, 84-111, and 208-235; these read WTKQ…HDLS, SPYG…HSKP, and ETKK…HGDS. The makorin-type Cys-His stretch occupies residues 236–263; it reads CDMCGLQVLHPVDAAQRSQHIKSCIEAH. The RING-type zinc-finger motif lies at 281 to 335; that stretch reads CGICMEVVYEKANPSERRFGILSNCNHTYCLKCIRKWRSAKQFESKIIKSCPECR. The segment at 364-393 adopts a C3H1-type 4 zinc-finger fold; the sequence is AMSNKACRYFDEGRGSCPFGGNCFYKHAYP.

In terms of assembly, interacts with p53/TP53 and CDKN1A. Interacts with TERT, modulating telomere length homeostasis. Post-translationally, auto-ubiquitinated; which leads to proteasomal degradation. As to expression, highly expressed in embryo, in specific cell types of the central nervous system, in brain with the strongest levels of expression in the mantle layers and in testis. Moderate to low levels in somatic tissues.

The enzyme catalyses S-ubiquitinyl-[E2 ubiquitin-conjugating enzyme]-L-cysteine + [acceptor protein]-L-lysine = [E2 ubiquitin-conjugating enzyme]-L-cysteine + N(6)-ubiquitinyl-[acceptor protein]-L-lysine.. It functions in the pathway protein modification; protein ubiquitination. Its function is as follows. E3 ubiquitin ligase catalyzing the covalent attachment of ubiquitin moieties onto substrate proteins. These substrates include FILIP1, p53/TP53, CDKN1A and TERT. Keeps cells alive by suppressing p53/TP53 under normal conditions, but stimulates apoptosis by repressing CDKN1A under stress conditions. Acts as a negative regulator of telomerase. Has negative and positive effects on RNA polymerase II-dependent transcription. The polypeptide is E3 ubiquitin-protein ligase makorin-1 (Mkrn1) (Mus musculus (Mouse)).